A 351-amino-acid chain; its full sequence is Heat-inducible transcription repressor HrcA (351 aa).

This sequence belongs to the HrcA family.

In terms of biological role, negative regulator of class I heat shock genes (grpE-dnaK-dnaJ and groELS operons). Prevents heat-shock induction of these operons. The chain is Heat-inducible transcription repressor HrcA from Fusobacterium nucleatum subsp. nucleatum (strain ATCC 25586 / DSM 15643 / BCRC 10681 / CIP 101130 / JCM 8532 / KCTC 2640 / LMG 13131 / VPI 4355).